We begin with the raw amino-acid sequence, 330 residues long: Membrane progestin receptor gamma (330 aa).

At 1-51 the chain is on the cytoplasmic side; that stretch reads MLSLKLPRLFSIDQIPQVFHEQGILFGYRHPQSSATACILSLFQMTNETLN. The chain crosses the membrane as a helical span at residues 52–72; it reads IWTHLLPFWFFAWRFVTALYM. Over 73-80 the chain is Extracellular; that stretch reads TDIKNDSY. Residues 81 to 101 traverse the membrane as a helical segment; sequence SWPMLVYMCTSCVYPLVSSCA. The Cytoplasmic portion of the chain corresponds to 102 to 113; sequence HTFSSMSKNARH. The helical transmembrane segment at 114–134 threads the bilayer; sequence ICYFLDYGAVNLFSLGSAIAY. Over 135 to 141 the chain is Extracellular; the sequence is SAYTFPD. The helical transmembrane segment at 142-162 threads the bilayer; sequence ALMCTTFHDYYVALAVLNTIL. Topologically, residues 163–186 are cytoplasmic; it reads STGLSCYSRFLEIQKPRLCKVIRV. The chain crosses the membrane as a helical span at residues 187 to 207; sequence LAFAYPYTWDSLPIFYRLFLF. At 208-253 the chain is on the extracellular side; sequence PGESAQNEATSYHQKHMIMTLLASFLYSAHLPERLAPGRFDYIGHS. A helical transmembrane segment spans residues 254–274; the sequence is HQLFHVCVILATHMQMEAILL. Over 275–294 the chain is Cytoplasmic; that stretch reads DKTLRKEWLLATSKPFSFSQ. Residues 295-315 traverse the membrane as a helical segment; that stretch reads IAGAILLCIIFSLSNIIYFSA. The Extracellular segment spans residues 316–330; it reads ALYRIPKPELHKKET.

The protein belongs to the ADIPOR family. As to expression, expressed in the brain, lung, kidney, colon, adrenal and lung.

The protein localises to the cell membrane. Functionally, plasma membrane progesterone (P4) receptor coupled to G proteins. Seems to act through a G(i) mediated pathway. May be involved in oocyte maturation. The chain is Membrane progestin receptor gamma from Homo sapiens (Human).